The following is a 52-amino-acid chain: uncharacterized protein (52 aa).

The interval 1-52 (MVNNDAKIGRREFYDRVESVRPKSPPRERPTYTYSNSRTVDGYSNRGPRADF) is disordered. The span at 7-30 (KIGRREFYDRVESVRPKSPPRERP) shows a compositional bias: basic and acidic residues.

This is an uncharacterized protein from Dictyostelium discoideum (Social amoeba).